Reading from the N-terminus, the 622-residue chain is Histone-lysine N-methyltransferase set9 (622 aa).

Residues 120–234 (SPFEITTTNR…IGEEITVSYG (115 aa)) form the SET domain. Disordered regions lie at residues 262–314 (VPSE…GKFV), 335–394 (QPAG…TTAT), 427–470 (PTTS…RGKP), and 576–622 (DRGV…RMTM). Residues 265–285 (EPQSKASTPALNDDTLSTDSH) are compositionally biased toward polar residues. Over residues 376 to 394 (PPSTAANESERSSTSTTAT) the composition is skewed to low complexity. Polar residues-rich tracts occupy residues 427-437 (PTTSLRSGSTE) and 446-458 (DQPSTLKQGSIGS). Positions 590–607 (SEPRTETEGSEGCEDRRT) are enriched in basic and acidic residues. Over residues 608-622 (TRASRRRTRSLRMTM) the composition is skewed to basic residues.

This sequence belongs to the class V-like SAM-binding methyltransferase superfamily. Histone-lysine methyltransferase family. Suvar4-20 subfamily.

The protein resides in the nucleus. The protein localises to the chromosome. The catalysed reaction is L-lysyl(20)-[histone H4] + 3 S-adenosyl-L-methionine = N(6),N(6),N(6)-trimethyl-L-lysyl(20)-[histone H4] + 3 S-adenosyl-L-homocysteine + 3 H(+). In terms of biological role, histone methyltransferase that trimethylates 'Lys-20' of histone H4 to form H4K20me3. The polypeptide is Histone-lysine N-methyltransferase set9 (set9) (Aspergillus fumigatus (strain ATCC MYA-4609 / CBS 101355 / FGSC A1100 / Af293) (Neosartorya fumigata)).